The chain runs to 519 residues: Cell division cycle protein 20 homolog B (519 aa).

The segment covering 79–98 (QSQTRALSSDSFGEEQSTTY) has biased composition (polar residues). Residues 79–133 (QSQTRALSSDSFGEEQSTTYLPEASGSVLKTPPEKETLTLGSRKEQLKTPSKGIS) are disordered. The span at 110-125 (PPEKETLTLGSRKEQL) shows a compositional bias: basic and acidic residues. WD repeat units follow at residues 229 to 266 (RNDYYLNILDWSFQNLVAIALGSAVYIWNGENHNGIEN), 271 to 310 (LTCNYISSVSWIKEGTCLAVGTSEGEVQLWDVVTKKRLRN), 311 to 341 (MLGHLSVVGALSWNHFILSSGSRLGRVYHHD), 353 to 392 (RHKQAVCALKWSPDGRLLSSGCSDGLLTIWPHDPGASAQG), 399 to 441 (TQST…SIQT), 443 to 484 (STNS…RSGG), and 487 to 519 (GHRGRVLHLSLSPDQTRVFSAAADGTASVWNCY).

The protein belongs to the WD repeat CDC20/Fizzy family. Expressed in multiciliated cells (MCCs).

The protein resides in the cytoplasm. Its function is as follows. Protein regulator of centriole-deuterosome disengagement and subsequently participates in the ciliogenesis in multiciliated cells (MCCs). This Homo sapiens (Human) protein is Cell division cycle protein 20 homolog B.